Here is a 538-residue protein sequence, read N- to C-terminus: Syncytin-1 (538 aa).

Residues 1–20 (MALPYHIFLFTVLLPSFTLT) form the signal peptide. Residues 21–443 (APPPCRCMTS…NTGPWGLLSQ (423 aa)) lie on the Extracellular side of the membrane. N169 carries an N-linked (GlcNAc...) asparagine glycan. A CXXC motif is present at residues 186–189 (CWIC). Disulfide bonds link C186–C189, C186–C405, and C397–C404. 5 N-linked (GlcNAc...) asparagine glycosylation sites follow: N208, N214, N234, N242, and N281. The fusion peptide stretch occupies residues 320–340 (ILPFVIGAGVLGALGTGIGGI). The segment at 380-396 (LQNRRALDLLTAERGGT) is immunosuppression. The CX6CC signature appears at 397–405 (CLFLGEECC). An N-linked (GlcNAc...) asparagine glycan is attached at N409. The chain crosses the membrane as a helical span at residues 444–464 (WMPWILPFLGPLAAIILLLLF). Residues 465–484 (GPCIFNLLVNFVSSRIEAVK) are essential for the fusiogenic function. At 465–538 (GPCIFNLLVN…LLRPNSAGSS (74 aa)) the chain is on the cytoplasmic side. Residues 496-538 (KIYRRPLDRPASPRSDVNDIKGTPPEEILTAQPLLRPNSAGSS) form a disordered region.

Belongs to the gamma type-C retroviral envelope protein family. HERV class-I W env subfamily. As to quaternary structure, the mature envelope protein (Env) consists of a trimer of SU-TM heterodimers attached probably by a labile interchain disulfide bond. Interacts with the C-type lectin CD209/DC-SIGN. In terms of processing, specific enzymatic cleavages in vivo yield mature proteins. Envelope glycoproteins are synthesized as an inactive precursor that is heavily N-glycosylated and processed likely by furin in the Golgi to yield the mature SU and TM proteins. The cleavage site between SU and TM requires the minimal sequence [KR]-X-[KR]-R. The CXXC motif is highly conserved across a broad range of retroviral envelope proteins. It is thought to participate in the formation of a labile disulfide bond possibly with the CX6CC motif present in the transmembrane protein.

The protein resides in the cell membrane. The protein localises to the virion. Functionally, this endogenous retroviral envelope protein has retained its original fusogenic properties and participates in trophoblast fusion and the formation of a syncytium during placenta morphogenesis. May recognize and induce fusion through binding of SLC1A4 and SLC1A5. Its function is as follows. Endogenous envelope proteins may have kept, lost or modified their original function during evolution. Retroviral envelope proteins mediate receptor recognition and membrane fusion during early infection. The surface protein (SU) mediates receptor recognition, while the transmembrane protein (TM) acts as a class I viral fusion protein. The protein may have at least 3 conformational states: pre-fusion native state, pre-hairpin intermediate state, and post-fusion hairpin state. During viral and target cell membrane fusion, the coiled coil regions (heptad repeats) assume a trimer-of-hairpins structure, positioning the fusion peptide in close proximity to the C-terminal region of the ectodomain. The formation of this structure appears to drive apposition and subsequent fusion of membranes. The chain is Syncytin-1 (ERVW-1) from Pan troglodytes (Chimpanzee).